We begin with the raw amino-acid sequence, 336 residues long: tRNA N6-adenosine threonylcarbamoyltransferase (336 aa).

Fe cation contacts are provided by H114 and H118. Substrate contacts are provided by residues 136–140 (LVSGG), D169, G182, D186, and N275. D302 serves as a coordination point for Fe cation.

It belongs to the KAE1 / TsaD family. Requires Fe(2+) as cofactor.

It localises to the cytoplasm. It carries out the reaction L-threonylcarbamoyladenylate + adenosine(37) in tRNA = N(6)-L-threonylcarbamoyladenosine(37) in tRNA + AMP + H(+). Functionally, required for the formation of a threonylcarbamoyl group on adenosine at position 37 (t(6)A37) in tRNAs that read codons beginning with adenine. Is involved in the transfer of the threonylcarbamoyl moiety of threonylcarbamoyl-AMP (TC-AMP) to the N6 group of A37, together with TsaE and TsaB. TsaD likely plays a direct catalytic role in this reaction. The protein is tRNA N6-adenosine threonylcarbamoyltransferase of Streptococcus agalactiae serotype Ia (strain ATCC 27591 / A909 / CDC SS700).